We begin with the raw amino-acid sequence, 280 residues long: Protein FLOURY 1-like (280 aa).

The helical transmembrane segment at 22-42 (GFGFGIFVIGCSSQFFNLVFL) threads the bilayer. Positions 153-187 (VALSETELDEKNHHGEEEESEDEEESQSQNDEDQL) are disordered. A compositionally biased stretch (acidic residues) spans 169-187 (EEESEDEEESQSQNDEDQL). A GTD-binding domain is found at 188–280 (LDVITLRTMV…LDDDEDKIQM (93 aa)).

It localises to the membrane. The sequence is that of Protein FLOURY 1-like from Arabidopsis thaliana (Mouse-ear cress).